Consider the following 299-residue polypeptide: Probable alpha-L-glutamate ligase (299 aa).

An ATP-grasp domain is found at 111-293; sequence LQALAAANIA…VATQMIAYLE (183 aa). ATP is bound by residues Lys147, 184–185, Asp193, and 217–219; these read DF and RAN. Mg(2+) contacts are provided by Asp254, Glu266, and Asn268. Asp254, Glu266, and Asn268 together coordinate Mn(2+).

This sequence belongs to the RimK family. Requires Mg(2+) as cofactor. It depends on Mn(2+) as a cofactor.

This is Probable alpha-L-glutamate ligase from Mannheimia succiniciproducens (strain KCTC 0769BP / MBEL55E).